Consider the following 388-residue polypeptide: Succinate--CoA ligase [ADP-forming] subunit beta (388 aa).

The 236-residue stretch at 9–244 (KQLFARYGLP…QSQEDPREAQ (236 aa)) folds into the ATP-grasp domain. ATP contacts are provided by residues Lys-46, 53–55 (GRG), Glu-99, Thr-102, and Glu-107. The Mg(2+) site is built by Asn-199 and Asp-213. Residues Asn-264 and 321–323 (GIV) contribute to the substrate site.

Belongs to the succinate/malate CoA ligase beta subunit family. As to quaternary structure, heterotetramer of two alpha and two beta subunits. Mg(2+) is required as a cofactor.

It carries out the reaction succinate + ATP + CoA = succinyl-CoA + ADP + phosphate. It catalyses the reaction GTP + succinate + CoA = succinyl-CoA + GDP + phosphate. The protein operates within carbohydrate metabolism; tricarboxylic acid cycle; succinate from succinyl-CoA (ligase route): step 1/1. In terms of biological role, succinyl-CoA synthetase functions in the citric acid cycle (TCA), coupling the hydrolysis of succinyl-CoA to the synthesis of either ATP or GTP and thus represents the only step of substrate-level phosphorylation in the TCA. The beta subunit provides nucleotide specificity of the enzyme and binds the substrate succinate, while the binding sites for coenzyme A and phosphate are found in the alpha subunit. The polypeptide is Succinate--CoA ligase [ADP-forming] subunit beta (Escherichia coli O8 (strain IAI1)).